The sequence spans 470 residues: Ras-like GTPase HI_1637 (470 aa).

The short motif at 27–34 is the Walker A motif element; that stretch reads GLSRSGKT. Positions 29, 32, 33, 34, 35, 98, 101, 102, 103, 342, 344, and 345 each coordinate GTP. Positions 32, 33, 34, 35, 98, 101, and 102 each coordinate GDP. Positions 342, 344, 345, 383, and 384 each coordinate GDP. V384 lines the GTP pocket.

It to E.coli YcjX. As to quaternary structure, monomer in solution. Mg(2+) serves as cofactor.

The enzyme catalyses GTP + H2O = GDP + phosphate + H(+). With respect to regulation, alternates between an inactive form bound to GDP and an active form bound to GTP. Likely activated by a guanine nucleotide-exchange factor (GEF). Functionally, binds GTP and GDP. Has intrinsic GTPase activity. Does not hydrolyze ATP. May act as a transducer of stress responses. The protein is Ras-like GTPase HI_1637 of Haemophilus influenzae (strain ATCC 51907 / DSM 11121 / KW20 / Rd).